A 240-amino-acid polypeptide reads, in one-letter code: Ribose-5-phosphate isomerase A (240 aa).

Substrate is bound by residues 41–44 (TGST), 94–97 (DGAD), and 107–110 (KGGG). E116 (proton acceptor) is an active-site residue. K134 is a substrate binding site.

Belongs to the ribose 5-phosphate isomerase family. In terms of assembly, homodimer.

The catalysed reaction is aldehydo-D-ribose 5-phosphate = D-ribulose 5-phosphate. It participates in carbohydrate degradation; pentose phosphate pathway; D-ribose 5-phosphate from D-ribulose 5-phosphate (non-oxidative stage): step 1/1. In terms of biological role, catalyzes the reversible conversion of ribose-5-phosphate to ribulose 5-phosphate. This is Ribose-5-phosphate isomerase A from Polaromonas sp. (strain JS666 / ATCC BAA-500).